The primary structure comprises 930 residues: Protein translocase subunit SecA (930 aa).

Residues Gln-83, 101-105, and Asp-491 contribute to the ATP site; that span reads GEGKT.

This sequence belongs to the SecA family. As to quaternary structure, monomer and homodimer. Part of the essential Sec protein translocation apparatus which comprises SecA, SecYEG and auxiliary proteins SecDF. Other proteins may also be involved.

Its subcellular location is the cell inner membrane. The protein resides in the cellular thylakoid membrane. It is found in the cytoplasm. It carries out the reaction ATP + H2O + cellular proteinSide 1 = ADP + phosphate + cellular proteinSide 2.. Functionally, part of the Sec protein translocase complex. Interacts with the SecYEG preprotein conducting channel. Has a central role in coupling the hydrolysis of ATP to the transfer of proteins into and across the cell membrane, serving as an ATP-driven molecular motor driving the stepwise translocation of polypeptide chains across the membrane. In terms of biological role, probably participates in protein translocation into and across both the cytoplasmic and thylakoid membranes in cyanobacterial cells. The protein is Protein translocase subunit SecA of Nostoc sp. (strain PCC 7120 / SAG 25.82 / UTEX 2576).